The chain runs to 417 residues: Tyrosine--tRNA ligase (417 aa).

Tyr-35 is a binding site for L-tyrosine. The 'HIGH' region motif lies at 40-49 (ATAGSLTVGH). L-tyrosine contacts are provided by Tyr-165 and Gln-169. Positions 229–233 (KFGKS) match the 'KMSKS' region motif. Lys-232 lines the ATP pocket. The S4 RNA-binding domain occupies 350-416 (ISLLEALVFT…GKRFNALIIF (67 aa)).

Belongs to the class-I aminoacyl-tRNA synthetase family. TyrS type 1 subfamily. As to quaternary structure, homodimer.

The protein localises to the cytoplasm. The catalysed reaction is tRNA(Tyr) + L-tyrosine + ATP = L-tyrosyl-tRNA(Tyr) + AMP + diphosphate + H(+). In terms of biological role, catalyzes the attachment of tyrosine to tRNA(Tyr) in a two-step reaction: tyrosine is first activated by ATP to form Tyr-AMP and then transferred to the acceptor end of tRNA(Tyr). This is Tyrosine--tRNA ligase from Phytoplasma mali (strain AT).